We begin with the raw amino-acid sequence, 85 residues long: Small ribosomal subunit protein uS12m (85 aa).

Belongs to the universal ribosomal protein uS12 family.

It localises to the mitochondrion matrix. The protein localises to the kinetoplast. Protein S12 is involved in the translation initiation step. This chain is Small ribosomal subunit protein uS12m (RPS12), found in Leishmania tarentolae (Sauroleishmania tarentolae).